The chain runs to 549 residues: Glucose-6-phosphate isomerase (549 aa).

Residues K80, K228, and K234 each carry the N6-acetyllysine modification. E355 (proton donor) is an active-site residue. Catalysis depends on residues H386 and K514.

This sequence belongs to the GPI family.

The protein resides in the cytoplasm. It carries out the reaction alpha-D-glucose 6-phosphate = beta-D-fructose 6-phosphate. It participates in carbohydrate biosynthesis; gluconeogenesis. Its pathway is carbohydrate degradation; glycolysis; D-glyceraldehyde 3-phosphate and glycerone phosphate from D-glucose: step 2/4. Its function is as follows. Catalyzes the reversible isomerization of glucose-6-phosphate to fructose-6-phosphate. This Escherichia coli (strain SMS-3-5 / SECEC) protein is Glucose-6-phosphate isomerase.